Reading from the N-terminus, the 188-residue chain is Peptidyl-tRNA hydrolase (188 aa).

A tRNA-binding site is contributed by Tyr-15. The active-site Proton acceptor is His-20. TRNA is bound by residues Phe-66, Asn-68, and Asn-114.

The protein belongs to the PTH family. Monomer.

The protein localises to the cytoplasm. The enzyme catalyses an N-acyl-L-alpha-aminoacyl-tRNA + H2O = an N-acyl-L-amino acid + a tRNA + H(+). Functionally, hydrolyzes ribosome-free peptidyl-tRNAs (with 1 or more amino acids incorporated), which drop off the ribosome during protein synthesis, or as a result of ribosome stalling. Its function is as follows. Catalyzes the release of premature peptidyl moieties from peptidyl-tRNA molecules trapped in stalled 50S ribosomal subunits, and thus maintains levels of free tRNAs and 50S ribosomes. The protein is Peptidyl-tRNA hydrolase of Lactococcus lactis subsp. cremoris (strain MG1363).